Reading from the N-terminus, the 805-residue chain is Leucine--tRNA ligase (805 aa).

A 'HIGH' region motif is present at residues P40–H51. The short motif at K576–S580 is the 'KMSKS' region element. Residue K579 participates in ATP binding.

It belongs to the class-I aminoacyl-tRNA synthetase family.

It is found in the cytoplasm. The enzyme catalyses tRNA(Leu) + L-leucine + ATP = L-leucyl-tRNA(Leu) + AMP + diphosphate. This chain is Leucine--tRNA ligase, found in Geobacillus kaustophilus (strain HTA426).